A 686-amino-acid polypeptide reads, in one-letter code: U3 small nucleolar RNA-associated protein 4 homolog (686 aa).

14 WD repeats span residues His-7–Phe-50, Gln-51–Asn-92, Ile-93–Ile-135, Gln-136–Lys-181, Met-182–Gly-226, Thr-227–Lys-275, Gln-276–Lys-317, Val-318–Lys-377, Asn-378–Leu-427, Lys-428–His-475, Ala-476–Leu-516, Lys-517–Thr-566, Val-567–Thr-627, and Asn-628–Arg-666. Lys-321 participates in a covalent cross-link: Glycyl lysine isopeptide (Lys-Gly) (interchain with G-Cter in SUMO2).

In terms of assembly, interacts with HIVEP1 Interacts with NOL11. Part of the small subunit (SSU) processome, composed of more than 70 proteins and the RNA chaperone small nucleolar RNA (snoRNA) U3. May be a component of the proposed t-UTP subcomplex of the ribosomal small subunit (SSU) processome containing at least UTP4, WDR43, HEATR1, UTP15, WDR75. May be phosphorylated during mitosis; may control the association of this protein with WRD43 and UTP15.

Its subcellular location is the nucleus. It localises to the nucleolus. It is found in the chromosome. Functionally, ribosome biogenesis factor. Involved in nucleolar processing of pre-18S ribosomal RNA. Part of the small subunit (SSU) processome, first precursor of the small eukaryotic ribosomal subunit. During the assembly of the SSU processome in the nucleolus, many ribosome biogenesis factors, an RNA chaperone and ribosomal proteins associate with the nascent pre-rRNA and work in concert to generate RNA folding, modifications, rearrangements and cleavage as well as targeted d Involved in SSU pre-rRNA processing at sites A', A0, 1 and 2b. Required for optimal pre-ribosomal RNA transcription by RNA polymerase. May be a transcriptional regulator. In terms of biological role, (Microbial infection) Acts as a positive regulator of HIVEP1 which specifically binds to the DNA sequence 5'-GGGACTTTCC-3' found in enhancer elements of numerous viral promoters such as those of HIV-1, SV40, or CMV. This Homo sapiens (Human) protein is U3 small nucleolar RNA-associated protein 4 homolog.